A 706-amino-acid polypeptide reads, in one-letter code: Elongation factor G (706 aa).

In terms of domain architecture, tr-type G spans 8–297 (SYVRNIGIGA…AVVDYLPSPN (290 aa)). GTP contacts are provided by residues 17–24 (AHIDAGKT), 95–99 (DTPGH), and 149–152 (NKMD).

The protein belongs to the TRAFAC class translation factor GTPase superfamily. Classic translation factor GTPase family. EF-G/EF-2 subfamily.

Its subcellular location is the cytoplasm. In terms of biological role, catalyzes the GTP-dependent ribosomal translocation step during translation elongation. During this step, the ribosome changes from the pre-translocational (PRE) to the post-translocational (POST) state as the newly formed A-site-bound peptidyl-tRNA and P-site-bound deacylated tRNA move to the P and E sites, respectively. Catalyzes the coordinated movement of the two tRNA molecules, the mRNA and conformational changes in the ribosome. This is Elongation factor G from Orientia tsutsugamushi (strain Boryong) (Rickettsia tsutsugamushi).